The primary structure comprises 148 residues: General odorant-binding protein 69a (148 aa).

The first 23 residues, 1-23 (MVARHFSFFLALLILYDLIPSNQ), serve as a signal peptide directing secretion. Disulfide bonds link Cys-42/Cys-74, Cys-70/Cys-121, and Cys-112/Cys-130.

The protein belongs to the PBP/GOBP family. As to expression, expressed in the antenna, mostly on the anterior surface of the third antennal segment. Expressed in auxiliary cells and the third antennal segment and exported to the sensillar lymph (at protein level).

Its subcellular location is the secreted. Odorant-binding protein required for olfactory behavior and activity of pheromone-sensitive neurons in response to the male-specific pheromone cis-vaccenyl acetate (cVA). Modulates social responsivity differently in males and females, regulating male aggression and female receptivity respectively. The polypeptide is General odorant-binding protein 69a (Obp69a) (Drosophila melanogaster (Fruit fly)).